A 132-amino-acid chain; its full sequence is Chaperone protein SycT (132 aa).

As to quaternary structure, binds to YopT.

Functions as a specific chaperone for YopT. In Yersinia pestis, this protein is Chaperone protein SycT (sycT).